The primary structure comprises 128 residues: SH2 domain-containing protein 1A (128 aa).

Residues 6-102 form the SH2 domain; it reads VYHGKISRET…GIVIPLQYPV (97 aa). An interaction with FYN SH3 domain region spans residues 67-92; the sequence is DTAPGVHKRFFRKIKNLISAFQKPDQ. The residue at position 89 (K89) is an N6-acetyllysine. The tract at residues 103 to 128 is disordered; the sequence is EKKSSARSTQGATGRREDPDVFLKTP. Residues 116–128 are compositionally biased toward basic and acidic residues; that stretch reads GRREDPDVFLKTP.

Interacts with CD84, CD244, LY9, SLAMF1 and FYN. Interacts with NTRK1, NTRK2 and NTRK3.

It is found in the cytoplasm. Its function is as follows. Cytoplasmic adapter regulating receptors of the signaling lymphocytic activation molecule (SLAM) family such as SLAMF1, CD244, LY9, CD84, SLAMF6 and SLAMF7. In SLAM signaling seems to cooperate with SH2D1B/EAT-2. Initially it has been proposed that association with SLAMF1 prevents SLAMF1 binding to inhibitory effectors including INPP5D/SHIP1 and PTPN11/SHP-2. However, by simultaneous interactions, recruits FYN which subsequently phosphorylates and activates SLAMF1. Positively regulates CD244/2B4- and CD84-mediated natural killer (NK) cell functions. Can also promote CD48-, SLAMF6 -, LY9-, and SLAMF7-mediated NK cell activation. In the context of NK cell-mediated cytotoxicity enhances conjugate formation with target cells. May also regulate the activity of the neurotrophin receptors NTRK1, NTRK2 and NTRK3. The sequence is that of SH2 domain-containing protein 1A (SH2D1A) from Sus scrofa (Pig).